Here is a 62-residue protein sequence, read N- to C-terminus: Small ribosomal subunit protein eS27 (62 aa).

Residues C17, C20, C36, and C39 each coordinate Zn(2+). The C4-type zinc-finger motif lies at 17–39; it reads CPDCENEQVVFERASTVVECTVC.

The protein belongs to the eukaryotic ribosomal protein eS27 family. In terms of assembly, part of the 30S ribosomal subunit. The cofactor is Zn(2+).

The sequence is that of Small ribosomal subunit protein eS27 from Methanoculleus marisnigri (strain ATCC 35101 / DSM 1498 / JR1).